The following is a 294-amino-acid chain: 4-hydroxy-tetrahydrodipicolinate synthase (294 aa).

Residue Thr-44 coordinates pyruvate. The active-site Proton donor/acceptor is the Tyr-132. The active-site Schiff-base intermediate with substrate is Lys-161. Position 206 (Ile-206) interacts with pyruvate.

Belongs to the DapA family. Homotetramer; dimer of dimers.

It is found in the cytoplasm. It catalyses the reaction L-aspartate 4-semialdehyde + pyruvate = (2S,4S)-4-hydroxy-2,3,4,5-tetrahydrodipicolinate + H2O + H(+). It functions in the pathway amino-acid biosynthesis; L-lysine biosynthesis via DAP pathway; (S)-tetrahydrodipicolinate from L-aspartate: step 3/4. Functionally, catalyzes the condensation of (S)-aspartate-beta-semialdehyde [(S)-ASA] and pyruvate to 4-hydroxy-tetrahydrodipicolinate (HTPA). The sequence is that of 4-hydroxy-tetrahydrodipicolinate synthase from Thermotoga sp. (strain RQ2).